A 204-amino-acid polypeptide reads, in one-letter code: 34 kDa membrane antigen (204 aa).

Residues 1 to 19 (MKRVSLLGSAAIFALVFSA) form the signal peptide. Cysteine 20 carries N-palmitoyl cysteine lipidation. Cysteine 20 carries S-diacylglycerol cysteine lipidation.

Belongs to the UPF0423 family.

It localises to the cell membrane. This antigen is a pathogen-specific membrane immunogen. This chain is 34 kDa membrane antigen (tpd), found in Treponema pallidum (strain Nichols).